The following is a 234-amino-acid chain: Glucosamine-6-phosphate deaminase (234 aa).

Asp-62 serves as the catalytic Proton acceptor; for enolization step. Asn-128 functions as the For ring-opening step in the catalytic mechanism. His-130 (proton acceptor; for ring-opening step) is an active-site residue. Catalysis depends on Glu-135, which acts as the For ring-opening step.

It belongs to the glucosamine/galactosamine-6-phosphate isomerase family. NagB subfamily.

It carries out the reaction alpha-D-glucosamine 6-phosphate + H2O = beta-D-fructose 6-phosphate + NH4(+). Its pathway is amino-sugar metabolism; N-acetylneuraminate degradation; D-fructose 6-phosphate from N-acetylneuraminate: step 5/5. In terms of biological role, catalyzes the reversible isomerization-deamination of glucosamine 6-phosphate (GlcN6P) to form fructose 6-phosphate (Fru6P) and ammonium ion. In Streptococcus equi subsp. zooepidemicus (strain MGCS10565), this protein is Glucosamine-6-phosphate deaminase.